Consider the following 138-residue polypeptide: MRILWIVAVCLIGVEGSVIEFGKMIQEETDKNPLTSYSFYGCHCGLGNKGKPKDATDRCCFVHSCCYAKLPDCSPKTNRYEYHRENGAIVCGSSTPCKKQICECDRAAAICFRENLKTYNKKYKVYLRFKCKGVSEKC.

A signal peptide spans 1–16; that stretch reads MRILWIVAVCLIGVEG. 7 disulfide bridges follow: cysteine 42/cysteine 131, cysteine 44/cysteine 60, cysteine 59/cysteine 111, cysteine 65/cysteine 138, cysteine 66/cysteine 104, cysteine 73/cysteine 97, and cysteine 91/cysteine 102. An important for membrane-damaging activities in eukaryotes and bacteria; heparin-binding region spans residues 121–133; it reads KKYKVYLRFKCKG.

The protein belongs to the phospholipase A2 family. Group II subfamily. S49 sub-subfamily. As to expression, expressed by the venom gland.

Its subcellular location is the secreted. Its function is as follows. Snake venom phospholipase A2 homolog that lacks enzymatic activity. Is very active in inducing myonecrosis in vivo and shows a potent calcium-independent membrane-damaging activity in vitro, most probably by binding and incorporating in the membrane. Also acts as a presynaptic neurotoxin. A model of myotoxic mechanism has been proposed: an apo Lys49-PLA2 is activated by the entrance of a hydrophobic molecule (e.g. fatty acid) at the hydrophobic channel of the protein leading to a reorientation of a monomer. This reorientation causes a transition between 'inactive' to 'active' states, causing alignment of C-terminal and membrane-docking sites (MDoS) side-by-side and putting the membrane-disruption sites (MDiS) in the same plane, exposed to solvent and in a symmetric position for both monomers. The MDoS region stabilizes the toxin on membrane by the interaction of charged residues with phospholipid head groups. Subsequently, the MDiS region destabilizes the membrane with penetration of hydrophobic residues. This insertion causes a disorganization of the membrane, allowing an uncontrolled influx of ions (i.e. calcium and sodium), and eventually triggering irreversible intracellular alterations and cell death. In Vipera ammodytes ammodytes (Western sand viper), this protein is Basic phospholipase A2 homolog ammodytin L.